Here is a 960-residue protein sequence, read N- to C-terminus: Ran GTPase-activating protein 2 (960 aa).

5 LRR repeats span residues 69-92 (HLNL…LIAE), 132-156 (GCRL…LYNF), 162-185 (LYSL…VGKA), 227-254 (LGTL…AFRM), and 313-340 (RDCL…CFNS). The segment at 370–408 (NIDFGRRGDDELLSSDEEEEQGAEDASMEEDAFNTSRET) is disordered. The span at 380 to 401 (ELLSSDEEEEQGAEDASMEEDA) shows a compositional bias: acidic residues. LRR repeat units lie at residues 475 to 498 (ASSM…VIAK), 538 to 561 (GCKI…ALKD), 568 to 595 (SFSL…LTEC), and 663 to 685 (NRNL…KALA). Residues 777–819 (PENVNVGDEDDDLGSLDGDQEEYNSKSSDSEDADLDDDDEDDD) form a disordered region. Composition is skewed to acidic residues over residues 783 to 798 (GDED…DQEE) and 806 to 819 (SEDA…EDDD).

It localises to the nucleus. In terms of biological role, GTPase system comprising ran-1, ran-2 and ran-3 is essential in nucleocytoplasmic trafficking. Ran-2 is a GTPase activator for the nuclear RAS-related regulatory protein Ran, converting it to the putatively inactive GDP-bound state. Required for correct chromosome alignment and segregation on the metaphase plate. The sequence is that of Ran GTPase-activating protein 2 (ran-2) from Caenorhabditis elegans.